Here is a 40-residue protein sequence, read N- to C-terminus: U12-ctenitoxin-Co1a (40 aa).

4 disulfides stabilise this stretch: cysteine 2–cysteine 16, cysteine 9–cysteine 22, cysteine 15–cysteine 31, and cysteine 24–cysteine 29.

As to expression, expressed by the venom gland.

It is found in the secreted. In terms of biological role, insecticidal neurotoxin that reversibly inhibits the N-methyl-D-aspartate (NMDA)-subtype of ionotropic glutamate receptor (GRIN) and inhibits inactivation of insect sodium channels (Nav). In vivo, is highly toxic to insects. This Ctenus ornatus (Brazilian spider) protein is U12-ctenitoxin-Co1a.